The primary structure comprises 235 residues: LexA repressor (235 aa).

The H-T-H motif DNA-binding region spans 47-67 (IREIADAVGLTSTSSVAHQLR). Catalysis depends on for autocatalytic cleavage activity residues Ser159 and Lys196.

It belongs to the peptidase S24 family. Homodimer.

It carries out the reaction Hydrolysis of Ala-|-Gly bond in repressor LexA.. Functionally, represses a number of genes involved in the response to DNA damage (SOS response), including recA and lexA. In the presence of single-stranded DNA, RecA interacts with LexA causing an autocatalytic cleavage which disrupts the DNA-binding part of LexA, leading to derepression of the SOS regulon and eventually DNA repair. This Mycobacterium leprae (strain Br4923) protein is LexA repressor.